A 769-amino-acid polypeptide reads, in one-letter code: Serine protease HtrA-like (769 aa).

Positions 1-20 (MDIGKKHVIPKSQYRRKRRE) are enriched in basic residues. A disordered region spans residues 1–390 (MDIGKKHVIP…ATSKLNKGRA (390 aa)). Composition is skewed to basic and acidic residues over residues 21-64 (FFHN…ERFK) and 71-108 (LEQR…DVSK). A compositionally biased stretch (polar residues) spans 126-137 (YEQNSEATLSTK). The segment covering 138-186 (STDKVESSDMRKLSPDKNKVGHEEQHVLSKPSEHDKETRIDFESSRTDS) has biased composition (basic and acidic residues). 2 stretches are compositionally biased toward polar residues: residues 202–221 (GNES…NTVP) and 247–262 (QQSQ…YGDS). Residues 264 to 295 (QNDKSNHENDLSHHTPSKSDDKDNVMREDHIV) show a composition bias toward basic and acidic residues. A compositionally biased stretch (polar residues) spans 298–308 (NPDNDINTPSL). The span at 310 to 330 (KIDDDRKLDEKIHVEDKHKQN) shows a compositional bias: basic and acidic residues. Over residues 331–347 (ADSSETVGYQSQSSVSH) the composition is skewed to polar residues. Residues 348 to 362 (RSTEKRNMAINDHHK) are compositionally biased toward basic and acidic residues. A compositionally biased stretch (polar residues) spans 366–390 (QKLNTKTSANNNQKKATSKLNKGRA). Residues 410-430 (LVILMGIIILIVILNAIFNNV) form a helical membrane-spanning segment. Catalysis depends on charge relay system residues histidine 504, aspartate 534, and serine 619. In terms of domain architecture, PDZ spans 680-733 (IASLNSFERQAVKLPGKVKNGVVVDQVDNNGLADQSSLKKGDVITELDGKLLED).

It belongs to the peptidase S1C family.

It localises to the cell membrane. This Staphylococcus aureus (strain bovine RF122 / ET3-1) protein is Serine protease HtrA-like.